A 210-amino-acid chain; its full sequence is Adenylate kinase (210 aa).

10 to 15 provides a ligand contact to ATP; it reads GSGKGT. The segment at 30–54 is NMP; that stretch reads SCGDILRKQNKCCDINKLIKKGELI. AMP-binding positions include arginine 36, 52 to 54, 80 to 83, and glutamine 87; these read ELI and GFPR. The tract at residues 117 to 154 is LID; it reads GRIIDKVSGEIYHLKFNPPKFITEKSNKNKILVRRLDD. Residues arginine 118 and 127–128 each bind ATP; that span reads IY. Positions 151 and 162 each coordinate AMP. Phenylalanine 195 lines the ATP pocket.

This sequence belongs to the adenylate kinase family. In terms of assembly, monomer.

It localises to the cytoplasm. It catalyses the reaction AMP + ATP = 2 ADP. It participates in purine metabolism; AMP biosynthesis via salvage pathway; AMP from ADP: step 1/1. Functionally, catalyzes the reversible transfer of the terminal phosphate group between ATP and AMP. Plays an important role in cellular energy homeostasis and in adenine nucleotide metabolism. This Wigglesworthia glossinidia brevipalpis protein is Adenylate kinase.